Here is a 67-residue protein sequence, read N- to C-terminus: Kappa-conotoxin-like 1 (67 aa).

Residues 1 to 26 form the signal peptide; sequence MMFRLTSVSCFLLVIACLNLFQVVLT. 4 disulfides stabilise this stretch: Cys-29-Cys-43, Cys-36-Cys-48, Cys-42-Cys-51, and Cys-47-Cys-55. The residue at position 59 (Ile-59) is an Isoleucine amide. Residues 63–67 constitute a propeptide that is removed on maturation; the sequence is ATFQE.

This sequence belongs to the conotoxin I2 superfamily. In terms of tissue distribution, expressed by the venom duct.

The protein resides in the secreted. Its function is as follows. Inhibits the vertebrate voltage-gated potassium channels Kv1.1/KCNA1 and Kv1.3/KCNA3. The sequence is that of Kappa-conotoxin-like 1 from Conus vexillum (Flag cone).